Here is a 247-residue protein sequence, read N- to C-terminus: uncharacterized protein (247 aa).

This is an uncharacterized protein from Rickettsia prowazekii (strain Madrid E).